The primary structure comprises 104 residues: Large ribosomal subunit protein uL24 (104 aa).

This sequence belongs to the universal ribosomal protein uL24 family. As to quaternary structure, part of the 50S ribosomal subunit.

Functionally, one of two assembly initiator proteins, it binds directly to the 5'-end of the 23S rRNA, where it nucleates assembly of the 50S subunit. One of the proteins that surrounds the polypeptide exit tunnel on the outside of the subunit. In Klebsiella pneumoniae (strain 342), this protein is Large ribosomal subunit protein uL24.